Here is a 192-residue protein sequence, read N- to C-terminus: Thiamine transporter ThiT (192 aa).

6 helical membrane passes run Leu-10–Phe-30, Leu-31–Phe-51, Ala-57–Ala-77, Val-81–Ala-101, Ala-123–Phe-143, and Tyr-164–Pro-184.

It belongs to the vitamin uptake transporter (VUT/ECF) (TC 2.A.88) family. Thiamine transporter subfamily. Forms a stable energy-coupling factor (ECF) transporter complex composed of a membrane-embedded substrate-binding protein (S component), two ATP-binding proteins (A components) and a transmembrane protein (T component).

It localises to the cell membrane. Functionally, probably a thiamine-binding protein that interacts with the energy-coupling factor (ECF) ABC-transporter complex. Unlike classic ABC transporters this ECF transporter provides the energy necessary to transport a number of different substrates. The substrates themselves are bound by transmembrane, not extracytoplasmic soluble proteins. The polypeptide is Thiamine transporter ThiT (thiT) (Bacillus subtilis (strain 168)).